The following is an 887-amino-acid chain: Ubiquitin carboxyl-terminal hydrolase 4 (887 aa).

The Rhodanese domain maps to K202–K328. Disordered regions lie at residues A358–P465 and Q484–R505. Residues T387–V402 show a composition bias toward polar residues. The 361-residue stretch at V525–I885 folds into the USP domain. C534 acts as the Nucleophile in catalysis. H842 serves as the catalytic Proton acceptor.

This sequence belongs to the peptidase C19 family.

It is found in the cytoplasm. The protein resides in the late endosome membrane. It catalyses the reaction Thiol-dependent hydrolysis of ester, thioester, amide, peptide and isopeptide bonds formed by the C-terminal Gly of ubiquitin (a 76-residue protein attached to proteins as an intracellular targeting signal).. RFU1 is an inhibitor of deubiquitination activity. Functionally, ubiquitin thioesterase that acts at the late endosome/prevacuolar compartment to recover ubiquitin from ubiquitinated membrane proteins en route to the vacuole. Also removes ubiquitin from soluble proteins targeted to proteasomes. Is essential to maintain a normal level of free ubiquitin. Required for promoting coordination of DNA replication and avoids DNA overreplication. This chain is Ubiquitin carboxyl-terminal hydrolase 4 (DOA4), found in Candida glabrata (strain ATCC 2001 / BCRC 20586 / JCM 3761 / NBRC 0622 / NRRL Y-65 / CBS 138) (Yeast).